The following is a 344-amino-acid chain: Ferrochelatase (344 aa).

The Fe cation site is built by H214 and E295.

Belongs to the ferrochelatase family.

It is found in the cytoplasm. The catalysed reaction is heme b + 2 H(+) = protoporphyrin IX + Fe(2+). It participates in porphyrin-containing compound metabolism; protoheme biosynthesis; protoheme from protoporphyrin-IX: step 1/1. In terms of biological role, catalyzes the ferrous insertion into protoporphyrin IX. The sequence is that of Ferrochelatase from Allorhizobium ampelinum (strain ATCC BAA-846 / DSM 112012 / S4) (Agrobacterium vitis (strain S4)).